We begin with the raw amino-acid sequence, 692 residues long: MSSFEGQMAEYPTISIDRFDRENLRARAYFLSHCHKDHMKGLRAPTLKRRLECSLKVYLYCSPVTKELLLTSPKYRFWKKRIISIEIETPTQISLVDEASGEKEEIVVTLLPAGHCPGSVMFLFQGNNGTVLYTGDFRLAQGEAARMELLHSGGRIKDIQSVYLDTTFCDPRFYQIPSREECLSGILELVRSWITRSPYHVVWLNCKAAYGYEYLFTNLSEELGVQVHVNKLDMFRNMPEILHHLTTDRNTQIHACRHPKAEEYFQWSKLPCGITSRNRIPLHIISIKPSTMWFGERSRKTNVIVRTGESSYRACFSFHSSYSEIKDFLSYLCPVNAYPNVIPVGTTMDKVVEILKPLCRSSQSMEPKYKPLGKLKRARTVHRDSEEEDDYLFDDPLPIPLRHKVPYQETLHPEVFSMTVVSEKQPEKLRQTPGCCRAESMQSSRFTNFVDCEESNSESEEEVGIPASLQGDLGSVLHLQKADGDVPQWKVFFKRNDEITDERLENFPSSTEAGGSQSPKLFSDSDGESTHISSQNSSQSTHITEQGSQGWDSQSDTVLLSSQERNSGDITSLDKVDYRPTIKENIPASLMEQNVICPKHTYSDLKSRDQDVTVVPSTGEPTTLSSETHIPEEKSLLNLSTNADSQSSSDFEVPSTPEAELPKREHLQYLYEKLATGESIAVKKRKCSLSDI.

Thr380 carries the post-translational modification Phosphothreonine. Ser385 is subject to Phosphoserine. 2 disordered regions span residues 503–555 (RLEN…DSQS) and 640–660 (STNADSQSSSDFEVPSTPEAE). Residues 507–520 (FPSSTEAGGSQSPK) are compositionally biased toward polar residues. The span at 530-543 (THISSQNSSQSTHI) shows a compositional bias: low complexity. 2 stretches are compositionally biased toward polar residues: residues 544 to 555 (TEQGSQGWDSQS) and 640 to 650 (STNADSQSSSD). At Ser645 the chain carries Phosphoserine; by ATM.

Belongs to the DNA repair metallo-beta-lactamase (DRMBL) family. Interacts with LIG4; the interaction is direct. Interacts with ATM. Interacts with BRCA1. Interacts with PRKDC. Interacts with TP53BP1. Also exhibits ATM- and phosphorylation-dependent interaction with the MRN complex, composed of MRE11, RAD50, and NBN. Post-translationally, phosphorylation on undefined residues by PRKDC may stimulate endonucleolytic activity on 5' and 3' hairpins and overhangs. PRKDC must remain present, even after phosphorylation, for efficient hairpin opening. Also phosphorylated by ATM in response to ionizing radiation (IR) and by ATR in response to ultraviolet (UV) radiation.

The protein localises to the nucleus. Required for V(D)J recombination, the process by which exons encoding the antigen-binding domains of immunoglobulins and T-cell receptor proteins are assembled from individual V, (D), and J gene segments. V(D)J recombination is initiated by the lymphoid specific RAG endonuclease complex, which generates site specific DNA double strand breaks (DSBs). These DSBs present two types of DNA end structures: hairpin sealed coding ends and phosphorylated blunt signal ends. These ends are independently repaired by the non homologous end joining (NHEJ) pathway to form coding and signal joints respectively. This protein exhibits single-strand specific 5'-3' exonuclease activity in isolation, and acquires endonucleolytic activity on 5' and 3' hairpins and overhangs when in a complex with PRKDC. The latter activity is required specifically for the resolution of closed hairpins prior to the formation of the coding joint. May also be required for the repair of complex DSBs induced by ionizing radiation, which require substantial end-processing prior to religation by NHEJ. This is Protein artemis (DCLRE1C) from Pongo abelii (Sumatran orangutan).